A 595-amino-acid chain; its full sequence is MRSQYCGDVNKSHVGQEVTLVGWVNRSRDLGGVVFLDLRDREGIVQVVYDPDLPEVFDVASTLRSEFCVQVTGLVRARPDSQVNQDMRTGGIEILGKGLTILNSSAPLPINMDKNQHNTEEQRLKYRYLDLRRPEMADRIVFRSKVTSAVRRFLDDSGFLDIETPILTKATPEGARDYLVPSRTYKGQFFALPQSPQLFKQLLMMSGFDRYYQIVKCFRDEDLRADRQPEFTQIDIETSFMSSEQVMAKTEEMVRGLFNDLLNVDLGEFPKMTFAEAMRRFGSDKPDLRNPLELIDIADIVKEVEFAVFNGPANDPEGRVAVLSIPGGAKLSRKQLDEYAKYVTIYGAKGLAWMKVNDLDQGMEGIQSPVLKFLSEDVVKALLDRTGAQTGDLILFGADKANIVAEAMGALRLKAGEDFDLLQGEWKPLWVVDFPMFERTSDGGLHAMHHPFTAPTGISPEQLEADPTAAISDAYDMVLNGCELGGGSVRIHNSEMQSAVFRILGIEEEEANEKFGFLLEALRYGTPPHAGLAFGLDRIIMLMTGASSIRDVMAFPKTTTAACPLTNAPGFANPAQLIELGIEVIENQESKEEQA.

E173 provides a ligand contact to L-aspartate. The tract at residues 197–200 is aspartate; sequence QLFK. R219 is a binding site for L-aspartate. Residues 219–221 and Q228 contribute to the ATP site; that span reads RDE. H449 contacts L-aspartate. An ATP-binding site is contributed by E483. R490 serves as a coordination point for L-aspartate. 535–538 is an ATP binding site; it reads GLDR.

It belongs to the class-II aminoacyl-tRNA synthetase family. Type 1 subfamily. As to quaternary structure, homodimer.

Its subcellular location is the cytoplasm. It catalyses the reaction tRNA(Asp) + L-aspartate + ATP = L-aspartyl-tRNA(Asp) + AMP + diphosphate. Its function is as follows. Catalyzes the attachment of L-aspartate to tRNA(Asp) in a two-step reaction: L-aspartate is first activated by ATP to form Asp-AMP and then transferred to the acceptor end of tRNA(Asp). This is Aspartate--tRNA ligase from Shewanella woodyi (strain ATCC 51908 / MS32).